A 921-amino-acid chain; its full sequence is Extended synaptotagmin-2 (921 aa).

Over 1 to 103 (MTANRDAALS…RPGGPENPGG (103 aa)) the chain is Cytoplasmic. Residues 1 to 103 (MTANRDAALS…RPGGPENPGG (103 aa)) form a disordered region. Residues 58–75 (GARRRAKTARGLRGHRQR) show a composition bias toward basic residues. A helical transmembrane segment spans residues 104–124 (VLSVELPGLLAQLARSFALLL). Residues 125 to 127 (PVY) lie on the Lumenal side of the membrane. The chain crosses the membrane as a helical span at residues 128 to 148 (ALGYLGLSFSWVLLALALLAW). The Cytoplasmic segment spans residues 149–921 (CRRSRGLKAL…EDGTRPQAMT (773 aa)). The SMP-LTD domain occupies 191–370 (DTERAEWLNK…LPNRITVPLV (180 aa)). C2 domains follow at residues 369-489 (LVSE…DEWF) and 514-639 (NLDK…QLSN). Ca(2+) contacts are provided by Lys400, Asp401, Asp413, Asp460, Glu461, Asp462, Asp464, Asp466, and Asp467. A disordered region spans residues 660-754 (RERPPDHQHS…GHISVKEPTP (95 aa)). Phosphoserine occurs at positions 691 and 693. Thr705 bears the Phosphothreonine mark. Ser736, Ser738, Ser739, Ser743, Ser748, Ser755, Ser758, and Ser761 each carry phosphoserine. A C2 3 domain is found at 786–908 (PLGQIQLTIR…ELAKGWTQWY (123 aa)). The segment at 833 to 840 (KRRSGRRK) is required for phosphatidylinositol 4,5-bisphosphate-dependent location at the cell membrane.

The protein belongs to the extended synaptotagmin family. In terms of assembly, homodimer. Interacts with ESYT1 and ESYT3. Interacts with FGFR1 that has been activated by FGF1 binding. Interacts with the AP-2 complex; identified in a complex with the AP-2 complex and FGFR1. Widely expressed with high level in cerebellum.

Its subcellular location is the cell membrane. It is found in the endoplasmic reticulum membrane. Functionally, tethers the endoplasmic reticulum to the cell membrane and promotes the formation of appositions between the endoplasmic reticulum and the cell membrane. Binds glycerophospholipids in a barrel-like domain and may play a role in cellular lipid transport. Plays a role in FGF signaling via its role in the rapid internalization of FGFR1 that has been activated by FGF1 binding; this occurs most likely via the AP-2 complex. Promotes the localization of SACM1L at endoplasmic reticulum-plasma membrane contact sites (EPCS). The protein is Extended synaptotagmin-2 of Homo sapiens (Human).